We begin with the raw amino-acid sequence, 372 residues long: Tyrosine--tRNA ligase (372 aa).

Positions 37, 169, 173, 176, and 191 each coordinate L-tyrosine. Positions 246-250 (KMSKS) match the 'KMSKS' region motif. Lysine 249 is a binding site for ATP.

This sequence belongs to the class-I aminoacyl-tRNA synthetase family. TyrS type 4 subfamily. As to quaternary structure, homodimer.

It is found in the cytoplasm. The catalysed reaction is tRNA(Tyr) + L-tyrosine + ATP = L-tyrosyl-tRNA(Tyr) + AMP + diphosphate + H(+). Catalyzes the attachment of tyrosine to tRNA(Tyr) in a two-step reaction: tyrosine is first activated by ATP to form Tyr-AMP and then transferred to the acceptor end of tRNA(Tyr). This is Tyrosine--tRNA ligase from Pyrobaculum arsenaticum (strain DSM 13514 / JCM 11321 / PZ6).